The primary structure comprises 284 residues: Rubber cis-polyprenyltransferase HRT2 (284 aa).

Residue Asp-41 is part of the active site.

Belongs to the UPP synthase family. As to expression, predominantly expressed in latex.

It catalyses the reaction (cis-prenyl)(n)-diphosphate + isopentenyl diphosphate = (cis-prenyl)(n+1)-diphosphate + diphosphate. Proposed to be involved in rubber biosynthesis as a particle-bound rubber transferase responsible for the cis-1,4-polymerization of isoprene subunits. Probably requires additional factors for the production of high molecular mass rubber. The chain is Rubber cis-polyprenyltransferase HRT2 (HRT2) from Hevea brasiliensis (Para rubber tree).